Here is a 193-residue protein sequence, read N- to C-terminus: Large ribosomal subunit protein uL18 (193 aa).

The protein belongs to the universal ribosomal protein uL18 family. As to quaternary structure, part of the 50S ribosomal subunit. Contacts the 5S and 23S rRNAs.

This is one of the proteins that bind and probably mediate the attachment of the 5S RNA into the large ribosomal subunit, where it forms part of the central protuberance. This is Large ribosomal subunit protein uL18 from Methanosphaera stadtmanae (strain ATCC 43021 / DSM 3091 / JCM 11832 / MCB-3).